The following is a 474-amino-acid chain: Bifunctional protein HldE (474 aa).

The tract at residues 1-318 (MKLSMPRFDQ…RAIQREEGSE (318 aa)) is ribokinase. 194–197 (NLSE) is an ATP binding site. Asp263 is an active-site residue. Residues 343-474 (FTNGCFDILH…AIVEKIRGQG (132 aa)) are cytidylyltransferase.

In the N-terminal section; belongs to the carbohydrate kinase PfkB family. It in the C-terminal section; belongs to the cytidylyltransferase family. As to quaternary structure, homodimer.

It carries out the reaction D-glycero-beta-D-manno-heptose 7-phosphate + ATP = D-glycero-beta-D-manno-heptose 1,7-bisphosphate + ADP + H(+). It catalyses the reaction D-glycero-beta-D-manno-heptose 1-phosphate + ATP + H(+) = ADP-D-glycero-beta-D-manno-heptose + diphosphate. Its pathway is nucleotide-sugar biosynthesis; ADP-L-glycero-beta-D-manno-heptose biosynthesis; ADP-L-glycero-beta-D-manno-heptose from D-glycero-beta-D-manno-heptose 7-phosphate: step 1/4. It participates in nucleotide-sugar biosynthesis; ADP-L-glycero-beta-D-manno-heptose biosynthesis; ADP-L-glycero-beta-D-manno-heptose from D-glycero-beta-D-manno-heptose 7-phosphate: step 3/4. Functionally, catalyzes the phosphorylation of D-glycero-D-manno-heptose 7-phosphate at the C-1 position to selectively form D-glycero-beta-D-manno-heptose-1,7-bisphosphate. In terms of biological role, catalyzes the ADP transfer from ATP to D-glycero-beta-D-manno-heptose 1-phosphate, yielding ADP-D-glycero-beta-D-manno-heptose. The protein is Bifunctional protein HldE of Pseudomonas syringae pv. syringae (strain B728a).